The sequence spans 229 residues: Transmembrane emp24 domain-containing protein 5 (229 aa).

The signal sequence occupies residues 1–27 (MGGRMWLPFPVLLLSALPAALLRGAAG). The Lumenal portion of the chain corresponds to 28-196 (FTPSLDSDFT…IQESNFDRVN (169 aa)). Positions 45 to 126 (KECFYQPMPL…EKVIFFELIL (82 aa)) constitute a GOLD domain. The helical transmembrane segment at 197–217 (FWSVVNLMVMVVVSAIQVYTL) threads the bilayer. Residues 218-229 (KSLFEDKRKSRT) lie on the Cytoplasmic side of the membrane.

This sequence belongs to the EMP24/GP25L family. Interacts with TMED9 and TMED10.

It is found in the endoplasmic reticulum membrane. The protein localises to the golgi apparatus. Its subcellular location is the cis-Golgi network membrane. It localises to the endoplasmic reticulum-Golgi intermediate compartment membrane. Functionally, potential role in vesicular protein trafficking, mainly in the early secretory pathway. Required for the maintenance of the Golgi apparatus; involved in protein exchange between Golgi stacks during assembly. Probably not required for COPI-vesicle-mediated retrograde transport. The polypeptide is Transmembrane emp24 domain-containing protein 5 (Tmed5) (Mus musculus (Mouse)).